A 599-amino-acid polypeptide reads, in one-letter code: Potassium-transporting ATPase potassium-binding subunit (599 aa).

The next 12 membrane-spanning stretches (helical) occupy residues 8-28 (LLAL…IWLA), 61-81 (WQYA…VYAL), 133-153 (ALAV…FALF), 176-196 (AWLL…NGVI), 280-300 (LTNF…CFAF), 311-331 (WAVL…ITPA), 366-386 (INAS…AVIA), 391-411 (FTPL…VVFG), 416-436 (GLYG…LMIG), 456-476 (IAIL…VLAG), 521-541 (LLGL…LAIA), and 563-583 (LFVL…YVPA).

The protein belongs to the KdpA family. As to quaternary structure, the system is composed of three essential subunits: KdpA, KdpB and KdpC.

It is found in the cell inner membrane. Functionally, part of the high-affinity ATP-driven potassium transport (or Kdp) system, which catalyzes the hydrolysis of ATP coupled with the electrogenic transport of potassium into the cytoplasm. This subunit binds the periplasmic potassium ions and delivers the ions to the membrane domain of KdpB through an intramembrane tunnel. In Polaromonas naphthalenivorans (strain CJ2), this protein is Potassium-transporting ATPase potassium-binding subunit.